A 500-amino-acid polypeptide reads, in one-letter code: Perfringolysin O (500 aa).

Positions Met-1–Ser-28 are cleaved as a signal peptide. Beta stranded transmembrane passes span Lys-189–Val-202, Val-209–Glu-218, Ser-287–Ala-296, and Lys-304–Ser-316. The Conserved undecapeptide signature appears at Glu-458–Arg-468. Residues Thr-490 to Leu-491 carry the Cholesterol binding motif.

The protein belongs to the cholesterol-dependent cytolysin family. Modeling based on cryo-EM shows a homooligomeric pore complex containing 38-44 subunits; when inserted in the host membrane.

The protein localises to the secreted. It localises to the host cell membrane. In terms of biological role, a cholesterol-dependent toxin that causes cytolysis by forming pores in cholesterol-containing host membranes. After binding to target membranes, the protein assembles into a pre-pore complex. A major conformational change leads to insertion in the host membrane and formation of an oligomeric pore complex. Cholesterol is required for binding to host cell membranes, membrane insertion and pore formation; cholesterol binding is mediated by a Thr-Leu pair in the C-terminus. Can be reversibly inactivated by oxidation. The protein is Perfringolysin O (pfo) of Clostridium perfringens (strain 13 / Type A).